The chain runs to 593 residues: ATP-dependent RNA helicase MRH4, mitochondrial (593 aa).

Residues 1–36 constitute a mitochondrion transit peptide; it reads MTLKIGGIVPIVRVMRDTIIQRPVSTFVRYHSKRSR. The Q motif motif lies at 132–139; the sequence is EIKPSPVQ. Positions 177–399 constitute a Helicase ATP-binding domain; sequence SNEMNRLKIF…GKMFPDEFSI (223 aa). 190–197 is an ATP binding site; it reads AETGSGKT. A DEAD box motif is present at residues 347–350; the sequence is DEAD. A Helicase C-terminal domain is found at 433–593; it reads CLAQALYAIH…KVIKKGIPLG (161 aa).

Belongs to the DEAD box helicase family. MRH4 subfamily.

It localises to the mitochondrion. The enzyme catalyses ATP + H2O = ADP + phosphate + H(+). Functionally, ATP-binding RNA helicase involved in mitochondrial RNA metabolism. Required for maintenance of mitochondrial DNA. The chain is ATP-dependent RNA helicase MRH4, mitochondrial (MRH4) from Debaryomyces hansenii (strain ATCC 36239 / CBS 767 / BCRC 21394 / JCM 1990 / NBRC 0083 / IGC 2968) (Yeast).